Consider the following 342-residue polypeptide: Cyclin-D3-1 (342 aa).

Residues 322–334 are compositionally biased toward polar residues; it reads VGSPATNYESSAS. The disordered stretch occupies residues 322 to 342; that stretch reads VGSPATNYESSASSKRRRICR.

It belongs to the cyclin family. Cyclin D subfamily.

This chain is Cyclin-D3-1 (CYCD3-1), found in Oryza sativa subsp. japonica (Rice).